The primary structure comprises 310 residues: uncharacterized protein (310 aa).

Disordered regions lie at residues 22 to 163 and 178 to 209; these read LARQ…PVEH and EAEA…VEGD. Basic and acidic residues-rich tracts occupy residues 56–66 and 183–197; these read IIRDDHHHAGP and TEVR…ERHA. Low complexity predominate over residues 198–209; the sequence is AAAAAGTDVEGD. The next 3 helical transmembrane spans lie at 231–251, 257–277, and 286–306; these read ALVV…FIAF, WNSI…VVSV, and IAST…PLAL.

The protein to M.leprae ML2433.

It localises to the cell membrane. This is an uncharacterized protein from Mycobacterium tuberculosis (strain CDC 1551 / Oshkosh).